The following is a 293-amino-acid chain: Nucleotide-binding protein Bcer98_3698 (293 aa).

Position 14-21 (14-21) interacts with ATP; the sequence is GMSGAGKT. Position 65–68 (65–68) interacts with GTP; sequence DLRG.

It belongs to the RapZ-like family.

Its function is as follows. Displays ATPase and GTPase activities. This chain is Nucleotide-binding protein Bcer98_3698, found in Bacillus cytotoxicus (strain DSM 22905 / CIP 110041 / 391-98 / NVH 391-98).